The following is a 187-amino-acid chain: Oligoribonuclease (187 aa).

An Exonuclease domain is found at 7–170; sequence LCWLDMEMTG…DDILESIEEM (164 aa). The active site involves tyrosine 128.

The protein belongs to the oligoribonuclease family.

It is found in the cytoplasm. 3'-to-5' exoribonuclease specific for small oligoribonucleotides. This chain is Oligoribonuclease, found in Neisseria meningitidis serogroup A / serotype 4A (strain DSM 15465 / Z2491).